A 683-amino-acid chain; its full sequence is FAD-binding monooxygenase ausC (683 aa).

N5 is a glycosylation site (N-linked (GlcNAc...) asparagine). The helical transmembrane segment at 111-131 (ILIIGAGFGGLLFAVRLIQTG) threads the bilayer. FAD contacts are provided by residues 150 to 153 (TWYW), 162 to 163 (DT), and Y168. 160–162 (MCD) provides a ligand contact to NADP(+). N286 carries an N-linked (GlcNAc...) asparagine glycan. NADP(+)-binding positions include 310 to 316 (TGASAVQ) and 333 to 334 (RT). N-linked (GlcNAc...) asparagine glycosylation is found at N525 and N572.

Belongs to the FAD-binding monooxygenase family. The cofactor is FAD.

It localises to the membrane. The catalysed reaction is preaustinoid A + AH2 + O2 = preaustinoid A1 + A + H2O. It participates in secondary metabolite biosynthesis; terpenoid biosynthesis. FAD-binding monooxygenase; part of the gene cluster A that mediates the biosynthesis of austinol and dehydroaustinol, two fungal meroterpenoids. The first step of the pathway is the synthesis of 3,5-dimethylorsellinic acid by the polyketide synthase ausA. 3,5-dimethylorsellinic acid is then prenylated by the polyprenyl transferase ausN. Further epoxidation by the FAD-dependent monooxygenase ausM and cyclization by the probable terpene cyclase ausL lead to the formation of protoaustinoid A. Protoaustinoid A is then oxidized to spiro-lactone preaustinoid A3 by the combined action of the FAD-binding monooxygenases ausB and ausC, and the dioxygenase ausE. Acid-catalyzed keto-rearrangement and ring contraction of the tetraketide portion of preaustinoid A3 by ausJ lead to the formation of preaustinoid A4. The aldo-keto reductase ausK, with the help of ausH, is involved in the next step by transforming preaustinoid A4 into isoaustinone which is in turn hydroxylated by the P450 monooxygenase ausI to form austinolide. Finally, the cytochrome P450 monooxygenase ausG modifies austinolide to austinol. Austinol can be further modified to dehydroaustinol which forms a diffusible complex with diorcinol that initiates conidiation. Due to genetic rearrangements of the clusters and the subsequent loss of some enzymes, the end products of the Emericella nidulans austinoid biosynthesis clusters are austinol and dehydroaustinol, even if additional enzymes, such as the O-acetyltransferase ausQ and the cytochrome P450 monooxygenase ausR are still functional. This chain is FAD-binding monooxygenase ausC, found in Emericella nidulans (strain FGSC A4 / ATCC 38163 / CBS 112.46 / NRRL 194 / M139) (Aspergillus nidulans).